Here is a 236-residue protein sequence, read N- to C-terminus: MTLKIGVPSKGRLMEKTFDWFGARGVTMRQTGAEREYSGAVDGVDGVELVLLSAGEIPRELGAGRIHLGVTGSDLVREKLADWSLQVAEMAPLGFGHADLIIAVPAFWIDVDTLDDLDAAAAAFRAAHGFRLRIATKYHRLVREFLMANGVADYQLVDSQGATEGTVKNGTAEAIADITSSGETLRANHLKILSDALVHSSQAVLFASRRADWSEAAGPFAALGARLGLPLPEALT.

Belongs to the ATP phosphoribosyltransferase family. Short subfamily. As to quaternary structure, heteromultimer composed of HisG and HisZ subunits.

The protein resides in the cytoplasm. The catalysed reaction is 1-(5-phospho-beta-D-ribosyl)-ATP + diphosphate = 5-phospho-alpha-D-ribose 1-diphosphate + ATP. It functions in the pathway amino-acid biosynthesis; L-histidine biosynthesis; L-histidine from 5-phospho-alpha-D-ribose 1-diphosphate: step 1/9. Catalyzes the condensation of ATP and 5-phosphoribose 1-diphosphate to form N'-(5'-phosphoribosyl)-ATP (PR-ATP). Has a crucial role in the pathway because the rate of histidine biosynthesis seems to be controlled primarily by regulation of HisG enzymatic activity. In Cereibacter sphaeroides (strain ATCC 17023 / DSM 158 / JCM 6121 / CCUG 31486 / LMG 2827 / NBRC 12203 / NCIMB 8253 / ATH 2.4.1.) (Rhodobacter sphaeroides), this protein is ATP phosphoribosyltransferase (hisG).